The following is a 530-amino-acid chain: Putative ABC transporter ATP-binding protein SSO1893 (530 aa).

ABC transporter domains lie at 6–243 (IRDL…LGLE) and 282–516 (ILFA…EPPL). Residues 38 to 45 (GRSGSGKS) and 314 to 321 (GKNGSGKT) each bind ATP.

Belongs to the ABC transporter superfamily.

It localises to the cell membrane. Its function is as follows. Probably part of an ABC transporter complex. Responsible for energy coupling to the transport system. In Saccharolobus solfataricus (strain ATCC 35092 / DSM 1617 / JCM 11322 / P2) (Sulfolobus solfataricus), this protein is Putative ABC transporter ATP-binding protein SSO1893.